A 91-amino-acid polypeptide reads, in one-letter code: Probable Fe(2+)-trafficking protein (91 aa).

The protein belongs to the Fe(2+)-trafficking protein family.

Its function is as follows. Could be a mediator in iron transactions between iron acquisition and iron-requiring processes, such as synthesis and/or repair of Fe-S clusters in biosynthetic enzymes. The sequence is that of Probable Fe(2+)-trafficking protein from Xanthomonas axonopodis pv. citri (strain 306).